Here is a 364-residue protein sequence, read N- to C-terminus: Valine dehydrogenase (364 aa).

Lys91 is a catalytic residue. Gly191–His197 is an NAD(+) binding site.

Belongs to the Glu/Leu/Phe/Val dehydrogenases family. In terms of assembly, homodimer.

The protein localises to the cytoplasm. It carries out the reaction L-valine + NAD(+) + H2O = 3-methyl-2-oxobutanoate + NH4(+) + NADH + H(+). It functions in the pathway amino-acid degradation; L-valine degradation. Repressed in minimal medium by the presence of glucose and NH4(+), glycerol and NH4(+), or glycerol and asparagine. Functionally, oxidative deamination of branched-chain amino acids. Oxidizes L-valine and L-alpha-aminobutyric acid efficiently, and L-isoleucine and L-leucine less efficiently. Does not act on D-valine. The catabolism of L-valine is the major source of fatty acid precursors for macrolide biosynthesis and a vital source of antibiotic precursors. Uses NAD; no activity was found with NADP. The chain is Valine dehydrogenase (vdh) from Streptomyces coelicolor (strain ATCC BAA-471 / A3(2) / M145).